The following is a 693-amino-acid chain: Lamina-associated polypeptide 2, isoforms alpha/zeta (693 aa).

An LEM-like domain is found at 5-48; the sequence is LEDPSVLTKDKLKSELVANNVTLPAGEQRKDVYVQLYLQHLTAR. Disordered regions lie at residues 48–113, 148–211, and 227–270; these read RNRP…DVTE, LREQ…LAST, and TRPP…KLAP. The linker stretch occupies residues 49 to 107; the sequence is NRPPLAAGANSKGPPDFSSDEEREPTPVLGSGASVGRGRGAVGRKATKKTDKPRLEDKD. Phosphoserine occurs at positions 59, 66, and 67. Thr-74 is modified (phosphothreonine). 2 positions are modified to phosphoserine: Ser-79 and Ser-82. Residues Arg-85 and Arg-87 each carry the omega-N-methylarginine modification. A compositionally biased stretch (basic and acidic residues) spans 96–105; the sequence is KKTDKPRLED. An LEM domain is found at 108-152; the sequence is DLDVTELSNEELLDQLVRYGVNPGPIVGTTRKLYEKKLLKLREQG. Residue Thr-153 is modified to Phosphothreonine. The span at 154–177 shows a compositional bias: polar residues; it reads ESRSSTPLPTVSSSAENTRQNGSN. Phosphoserine is present on residues Ser-155 and Ser-158. Residues Thr-159 and Thr-163 each carry the phosphothreonine modification. Phosphoserine is present on residues Ser-165 and Ser-167. Positions 178–190 are enriched in basic and acidic residues; sequence DSDRYSDNDEGKK. Residues 190–196 carry the Nuclear localization signal motif; that stretch reads KKEHKKV. Ser-206 is subject to N6-acetyllysine. Residues 245 to 254 are compositionally biased toward basic and acidic residues; that stretch reads TKRDPPRETC. Ser-310 is modified (phosphoserine). An Omega-N-methylarginine modification is found at Arg-329. The interval 332–351 is disordered; that stretch reads KSRAQPLRAEEPGVSDQSVF. Phosphoserine occurs at positions 349, 352, 368, 420, and 422. The segment covering 412–422 has biased composition (low complexity); that stretch reads QSSYQDSESLS. Positions 412-442 are disordered; sequence QSSYQDSESLSPPRKVPRLSEKPARGGDSGS. A coiled-coil region spans residues 557-656; sequence TESCDKHLDL…MGRRYLWLKD (100 aa). N6-acetyllysine is present on Lys-655.

The protein belongs to the LEM family. In terms of assembly, homooligomer. Interacts with LMNA, BANF1 and RB1 and with chromosomes. Associates directly or indirectly with lamins at specific cell-cycle stages. Interacts with CMTM6. Post-translationally, phosphorylated in a mitose-specific manner.

The protein localises to the nucleus. It is found in the chromosome. Its function is as follows. May be involved in the structural organization of the nucleus and in the post-mitotic nuclear assembly. Plays an important role, together with LMNA, in the nuclear anchorage of RB1. This chain is Lamina-associated polypeptide 2, isoforms alpha/zeta (Tmpo), found in Mus musculus (Mouse).